The sequence spans 440 residues: Elongation factor 1-gamma (440 aa).

Ala-2 bears the N-acetylalanine mark. The 86-residue stretch at 2 to 87 (AAGTLYTYPE…YVSNEELRGS (86 aa)) folds into the GST N-terminal domain. The GST C-terminal domain occupies 88–216 (TPEAAAQVVQ…VKLCEKMAQF (129 aa)). N6-acetyllysine is present on residues Lys-147 and Lys-212. The segment covering 221–257 (FAESQPKKDTPRKEKGSREEKLKPQAERKEGKEEKKA) has biased composition (basic and acidic residues). Residues 221–267 (FAESQPKKDTPRKEKGSREEKLKPQAERKEGKEEKKAAAPAPEEELD) are disordered. Lys-256 is covalently cross-linked (Glycyl lysine isopeptide (Lys-Gly) (interchain with G-Cter in SUMO1)). One can recognise an EF-1-gamma C-terminal domain in the interval 279–440 (AKDPFAHLPK…KAFNQGKIFK (162 aa)). Lys-288 participates in a covalent cross-link: Glycyl lysine isopeptide (Lys-Gly) (interchain with G-Cter in SUMO2). Lys-404 carries the N6-acetyllysine modification. Lys-437 bears the N6-acetyllysine; alternate mark. Lys-437 carries the N6-malonyllysine; alternate modification.

In terms of assembly, EF-1 is composed of four subunits: alpha, beta, delta, and gamma.

Functionally, probably plays a role in anchoring the complex to other cellular components. This Bos taurus (Bovine) protein is Elongation factor 1-gamma (EEF1G).